Reading from the N-terminus, the 206-residue chain is Amelogenin, Y isoform (206 aa).

The N-terminal stretch at 1 to 16 is a signal peptide; sequence MGTWILFACLVGAAFA. Positions 118–180 are disordered; sequence VPGQQSMTPT…PPLPPMFPLR (63 aa). Positions 128-142 are enriched in low complexity; it reads QHHQPNLPLPAQQPF. A compositionally biased stretch (pro residues) spans 143–180; it reads QPQPVQPQPHQPMQPQPPVQPMQPLLPQPPLPPMFPLR.

Belongs to the amelogenin family.

It is found in the secreted. The protein resides in the extracellular space. Its subcellular location is the extracellular matrix. Its function is as follows. Plays a role in biomineralization. Seems to regulate the formation of crystallites during the secretory stage of tooth enamel development. Thought to play a major role in the structural organization and mineralization of developing enamel. In Homo sapiens (Human), this protein is Amelogenin, Y isoform (AMELY).